The primary structure comprises 431 residues: Beta-1,4-glucuronyltransferase 1 (431 aa).

The Cytoplasmic segment spans residues 1–11; sequence MHFSKKCSVFK. Residues 12–32 traverse the membrane as a helical segment; it reads VVLSALLIVALLQLLYLSFLS. Residues 33–431 lie on the Lumenal side of the membrane; that stretch reads KLHGKQQRYK…AKYPTSPRRC (399 aa). Residue asparagine 216 is glycosylated (N-linked (GlcNAc...) asparagine). Mn(2+)-binding residues include aspartate 241 and aspartate 243. Residue asparagine 314 is glycosylated (N-linked (GlcNAc...) asparagine).

Belongs to the glycosyltransferase 49 family. It depends on Mn(2+) as a cofactor.

It is found in the golgi apparatus membrane. The catalysed reaction is 3-O-[beta-D-Xyl-(1-&gt;4)-Rib-ol-P-Rib-ol-P-3-beta-D-GalNAc-(1-&gt;3)-beta-D-GlcNAc-(1-&gt;4)-(O-6-P-alpha-D-Man)]-Thr-[protein] + UDP-alpha-D-glucuronate = 3-O-[beta-D-GlcA-(1-&gt;3)-beta-D-Xyl-(1-&gt;4)-Rib-ol-P-Rib-ol-P-3-beta-D-GalNAc-(1-&gt;3)-beta-D-GlcNAc-(1-&gt;4)-(O-6-P-alpha-D-Man)]-Thr-[protein] + UDP + H(+). The protein operates within protein modification; protein glycosylation. In terms of biological role, beta-1,4-glucuronyltransferase involved in O-mannosylation of alpha-dystroglycan (DAG1). Transfers a glucuronic acid (GlcA) residue onto a xylose (Xyl) acceptor to produce the glucuronyl-beta-1,4-xylose-beta disaccharide primer, which is further elongated by LARGE, during synthesis of phosphorylated O-mannosyl glycan. Phosphorylated O-mannosyl glycan is a carbohydrate structure present in alpha-dystroglycan (DAG1), which is required for binding laminin G-like domain-containing extracellular proteins with high affinity. Required for axon guidance; via its function in O-mannosylation of alpha-dystroglycan (DAG1). This chain is Beta-1,4-glucuronyltransferase 1, found in Danio rerio (Zebrafish).